A 358-amino-acid chain; its full sequence is Arginase (358 aa).

Residues His146, Asp174, His176, and Asp178 each coordinate Mn(2+). Residues 176–180 (HADIN), 187–189 (SGN), and Asp233 each bind substrate. 2 residues coordinate Mn(2+): Asp280 and Asp282. Thr294 and Glu325 together coordinate substrate.

It belongs to the arginase family. Homohexamer. Requires Mn(2+) as cofactor.

Its subcellular location is the cytoplasm. It catalyses the reaction L-arginine + H2O = urea + L-ornithine. Its pathway is nitrogen metabolism; urea cycle; L-ornithine and urea from L-arginine: step 1/1. The chain is Arginase (aga-1) from Neurospora crassa (strain ATCC 24698 / 74-OR23-1A / CBS 708.71 / DSM 1257 / FGSC 987).